We begin with the raw amino-acid sequence, 284 residues long: Probable endonuclease 4 (284 aa).

9 residues coordinate Zn(2+): H69, H109, E145, D179, H182, H216, D229, H231, and E261.

Belongs to the AP endonuclease 2 family. Requires Zn(2+) as cofactor.

The enzyme catalyses Endonucleolytic cleavage to 5'-phosphooligonucleotide end-products.. Functionally, endonuclease IV plays a role in DNA repair. It cleaves phosphodiester bonds at apurinic or apyrimidinic (AP) sites, generating a 3'-hydroxyl group and a 5'-terminal sugar phosphate. This chain is Probable endonuclease 4, found in Klebsiella pneumoniae subsp. pneumoniae (strain ATCC 700721 / MGH 78578).